The following is a 61-amino-acid chain: Large ribosomal subunit protein bL32 (61 aa).

Positions 1–44 (MAVQQNRKSRSRRDMRRSHDALTENALTVDQATGETHRRHHVTK) are disordered. Residues 7 to 16 (RKSRSRRDMR) are compositionally biased toward basic residues. The span at 25–34 (NALTVDQATG) shows a compositional bias: polar residues.

Belongs to the bacterial ribosomal protein bL32 family.

This is Large ribosomal subunit protein bL32 from Acinetobacter baumannii (strain AB307-0294).